A 254-amino-acid chain; its full sequence is Phosphatidylglycerol--prolipoprotein diacylglyceryl transferase (254 aa).

Helical transmembrane passes span 11 to 31, 49 to 69, 84 to 104, and 109 to 129; these read LAIRWYGVVISIGAALGLLLA, FLIAFPSAIIGARLYYVIFEF, QGGLAIHGGIIFGVLAVYIYL, and ESFFEYVDVAAPSIILGQAIG. Arg-130 lines the a 1,2-diacyl-sn-glycero-3-phospho-(1'-sn-glycerol) pocket. 3 consecutive transmembrane segments (helical) span residues 169–189, 196–216, and 228–248; these read PTFLYESIWNFIVCIFLVYLL, GIVFMAYIGLYSLGRFFIEGL, and VAQLISVLGIILSIFFIYNII.

This sequence belongs to the Lgt family.

It localises to the cell membrane. The catalysed reaction is L-cysteinyl-[prolipoprotein] + a 1,2-diacyl-sn-glycero-3-phospho-(1'-sn-glycerol) = an S-1,2-diacyl-sn-glyceryl-L-cysteinyl-[prolipoprotein] + sn-glycerol 1-phosphate + H(+). It participates in protein modification; lipoprotein biosynthesis (diacylglyceryl transfer). Its function is as follows. Catalyzes the transfer of the diacylglyceryl group from phosphatidylglycerol to the sulfhydryl group of the N-terminal cysteine of a prolipoprotein, the first step in the formation of mature lipoproteins. This is Phosphatidylglycerol--prolipoprotein diacylglyceryl transferase from Clostridium botulinum (strain Langeland / NCTC 10281 / Type F).